The sequence spans 173 residues: Large ribosomal subunit protein uL10 (173 aa).

This sequence belongs to the universal ribosomal protein uL10 family. Part of the ribosomal stalk of the 50S ribosomal subunit. The N-terminus interacts with L11 and the large rRNA to form the base of the stalk. The C-terminus forms an elongated spine to which L12 dimers bind in a sequential fashion forming a multimeric L10(L12)X complex.

In terms of biological role, forms part of the ribosomal stalk, playing a central role in the interaction of the ribosome with GTP-bound translation factors. The polypeptide is Large ribosomal subunit protein uL10 (Cupriavidus metallidurans (strain ATCC 43123 / DSM 2839 / NBRC 102507 / CH34) (Ralstonia metallidurans)).